The chain runs to 412 residues: [Pyruvate dehydrogenase (acetyl-transferring)] kinase isozyme 4, mitochondrial (412 aa).

The Histidine kinase domain maps to 138–368 (ILEYKDTCTV…DAIIYLKALS (231 aa)). ATP-binding positions include 254–261 (ELFKNAMR), aspartate 293, 312–313 (ST), and 329–334 (GFGYGL).

Belongs to the PDK/BCKDK protein kinase family. As to quaternary structure, homodimer. Interacts with the pyruvate dehydrogenase complex subunit DLAT, and is part of the multimeric pyruvate dehydrogenase complex that contains multiple copies of pyruvate dehydrogenase (E1), dihydrolipoamide acetyltransferase (DLAT, E2) and lipoamide dehydrogenase (DLD, E3). Detected in skeletal muscle and heart.

The protein resides in the mitochondrion matrix. It catalyses the reaction L-seryl-[pyruvate dehydrogenase E1 alpha subunit] + ATP = O-phospho-L-seryl-[pyruvate dehydrogenase E1 alpha subunit] + ADP + H(+). In terms of biological role, kinase that plays a key role in regulation of glucose and fatty acid metabolism and homeostasis via phosphorylation of the pyruvate dehydrogenase subunits PDHA1 and PDHA2. This inhibits pyruvate dehydrogenase activity, and thereby regulates metabolite flux through the tricarboxylic acid cycle, down-regulates aerobic respiration and inhibits the formation of acetyl-coenzyme A from pyruvate. Inhibition of pyruvate dehydrogenase decreases glucose utilization and increases fat metabolism in response to prolonged fasting and starvation. Plays an important role in maintaining normal blood glucose levels under starvation, and is involved in the insulin signaling cascade. Via its regulation of pyruvate dehydrogenase activity, plays an important role in maintaining normal blood pH and in preventing the accumulation of ketone bodies under starvation. In the fed state, mediates cellular responses to glucose levels and to a high-fat diet. Regulates both fatty acid oxidation and de novo fatty acid biosynthesis. Plays a role in the generation of reactive oxygen species. Protects detached epithelial cells against anoikis. Plays a role in cell proliferation via its role in regulating carbohydrate and fatty acid metabolism. This Ictidomys tridecemlineatus (Thirteen-lined ground squirrel) protein is [Pyruvate dehydrogenase (acetyl-transferring)] kinase isozyme 4, mitochondrial (PDK4).